The primary structure comprises 406 residues: Multifunctional CCA protein (406 aa).

ATP-binding residues include G8 and R11. CTP contacts are provided by G8 and R11. Mg(2+) contacts are provided by D21 and D23. ATP contacts are provided by R91, R138, and R141. Residues R91, R138, and R141 each contribute to the CTP site. The HD domain occupies T229–L331.

This sequence belongs to the tRNA nucleotidyltransferase/poly(A) polymerase family. Bacterial CCA-adding enzyme type 1 subfamily. Monomer. Can also form homodimers and oligomers. Requires Mg(2+) as cofactor. The cofactor is Ni(2+).

It catalyses the reaction a tRNA precursor + 2 CTP + ATP = a tRNA with a 3' CCA end + 3 diphosphate. The enzyme catalyses a tRNA with a 3' CCA end + 2 CTP + ATP = a tRNA with a 3' CCACCA end + 3 diphosphate. Functionally, catalyzes the addition and repair of the essential 3'-terminal CCA sequence in tRNAs without using a nucleic acid template. Adds these three nucleotides in the order of C, C, and A to the tRNA nucleotide-73, using CTP and ATP as substrates and producing inorganic pyrophosphate. tRNA 3'-terminal CCA addition is required both for tRNA processing and repair. Also involved in tRNA surveillance by mediating tandem CCA addition to generate a CCACCA at the 3' terminus of unstable tRNAs. While stable tRNAs receive only 3'-terminal CCA, unstable tRNAs are marked with CCACCA and rapidly degraded. This is Multifunctional CCA protein from Stenotrophomonas maltophilia (strain K279a).